Consider the following 659-residue polypeptide: RNA polymerase II subunit A C-terminal domain phosphatase (659 aa).

One can recognise an FCP1 homology domain in the interval 139–303 (ITNRKLVLLV…KNSKEQMPVQ (165 aa)). The 93-residue stretch at 351-443 (ERHKVLDGCV…LKADENLFQL (93 aa)) folds into the BRCT domain. A compositionally biased stretch (acidic residues) spans 484–504 (ALSDDEDDGDNEDEDDDGNDV). The disordered stretch occupies residues 484–640 (ALSDDEDDGD…PESDDDDEFE (157 aa)). Over residues 505–519 (GEDKGDENLEEKQEK) the composition is skewed to basic and acidic residues. Polar residues predominate over residues 529–538 (QNGSVENQSG). Composition is skewed to acidic residues over residues 560–576 (MEDE…DDDT), 596–607 (ENEDDAVFDVDD), and 616–640 (IDEE…DEFE).

The protein resides in the nucleus. It catalyses the reaction O-phospho-L-seryl-[protein] + H2O = L-seryl-[protein] + phosphate. The catalysed reaction is O-phospho-L-threonyl-[protein] + H2O = L-threonyl-[protein] + phosphate. During the late stages of oogenesis, dephosphorylates 'Ser-5' of the heptad repeats YSPTSPS in the C-terminal domain of the largest RNA polymerase II subunit ama-1. Similarly, dephosphorylates 'Ser-5' of ama-1 in early embryonic cells prior to the activation of the zygotic transcription program at the 4-cell embryonic stage. May dephosphorylate 'Ser-2' of the ama-1 heptad repeats YSPTSPS in embryonic somatic and germline cells. The polypeptide is RNA polymerase II subunit A C-terminal domain phosphatase (Caenorhabditis elegans).